Consider the following 490-residue polypeptide: Cytochrome P450 2C14 (490 aa).

Cysteine 435 provides a ligand contact to heme.

Belongs to the cytochrome P450 family. The cofactor is heme.

It localises to the endoplasmic reticulum membrane. The protein localises to the microsome membrane. The enzyme catalyses an organic molecule + reduced [NADPH--hemoprotein reductase] + O2 = an alcohol + oxidized [NADPH--hemoprotein reductase] + H2O + H(+). In terms of biological role, cytochromes P450 are a group of heme-thiolate monooxygenases. In liver microsomes, this enzyme is involved in an NADPH-dependent electron transport pathway. It oxidizes a variety of structurally unrelated compounds, including steroids, fatty acids, and xenobiotics. This Oryctolagus cuniculus (Rabbit) protein is Cytochrome P450 2C14 (CYP2C14).